Consider the following 319-residue polypeptide: Acetyl-coenzyme A carboxylase carboxyl transferase subunit alpha (319 aa).

Positions 35 to 296 constitute a CoA carboxyltransferase C-terminal domain; the sequence is NIDEEVHRLR…KAQLLADLAD (262 aa).

Belongs to the AccA family. In terms of assembly, acetyl-CoA carboxylase is a heterohexamer composed of biotin carboxyl carrier protein (AccB), biotin carboxylase (AccC) and two subunits each of ACCase subunit alpha (AccA) and ACCase subunit beta (AccD).

Its subcellular location is the cytoplasm. The enzyme catalyses N(6)-carboxybiotinyl-L-lysyl-[protein] + acetyl-CoA = N(6)-biotinyl-L-lysyl-[protein] + malonyl-CoA. It functions in the pathway lipid metabolism; malonyl-CoA biosynthesis; malonyl-CoA from acetyl-CoA: step 1/1. Its function is as follows. Component of the acetyl coenzyme A carboxylase (ACC) complex. First, biotin carboxylase catalyzes the carboxylation of biotin on its carrier protein (BCCP) and then the CO(2) group is transferred by the carboxyltransferase to acetyl-CoA to form malonyl-CoA. This chain is Acetyl-coenzyme A carboxylase carboxyl transferase subunit alpha, found in Shigella boydii serotype 4 (strain Sb227).